The following is a 243-amino-acid chain: UPF0502 protein RALTA_B0914 (243 aa).

The span at 1–10 shows a compositional bias: polar residues; that stretch reads MPSTPESDPT. A disordered region spans residues 1 to 23; sequence MPSTPESDPTQPGDRPARPALRP.

It belongs to the UPF0502 family.

In Cupriavidus taiwanensis (strain DSM 17343 / BCRC 17206 / CCUG 44338 / CIP 107171 / LMG 19424 / R1) (Ralstonia taiwanensis (strain LMG 19424)), this protein is UPF0502 protein RALTA_B0914.